Here is a 488-residue protein sequence, read N- to C-terminus: Altronate oxidoreductase (488 aa).

Position 18–29 (18–29 (VIQFGEGNFLRA)) interacts with NAD(+).

It belongs to the mannitol dehydrogenase family. UxaB subfamily.

It carries out the reaction D-altronate + NAD(+) = keto-D-tagaturonate + NADH + H(+). The protein operates within carbohydrate metabolism; pentose and glucuronate interconversion. This chain is Altronate oxidoreductase, found in Pectobacterium atrosepticum (strain SCRI 1043 / ATCC BAA-672) (Erwinia carotovora subsp. atroseptica).